Reading from the N-terminus, the 499-residue chain is Nuclear receptor-binding protein 2 (499 aa).

The segment at 1-31 is disordered; it reads MAAPEPAPRRGREREREDESEDESDILEESP. The segment covering 7 to 17 has biased composition (basic and acidic residues); it reads APRRGRERERE. The span at 18–28 shows a compositional bias: acidic residues; that stretch reads DESEDESDILE. A Protein kinase domain is found at 36-304; it reads QKRREQVNQG…AHNLLFHRVL (269 aa). Positions 396 to 416 are disordered; it reads APPPEEAQKAKTPTPEPFDSE. Residues T407 and T409 each carry the phosphothreonine modification.

This sequence belongs to the protein kinase superfamily. Ser/Thr protein kinase family. In terms of tissue distribution, expressed in Purkinje cells of the cerebellum and neurons in the CA3 region of the hippocampus. Also detected in non-neural tissues including mesenchymal layer adjacent to epithelium in developing bronchi of the lung, the epithelium of the stomach as well as cells in the liver.

It is found in the cytoplasm. Its function is as follows. May regulate apoptosis of neural progenitor cells during their differentiation. The chain is Nuclear receptor-binding protein 2 from Mus musculus (Mouse).